The chain runs to 139 residues: ATP synthase epsilon chain 2 (139 aa).

It belongs to the ATPase epsilon chain family. F-type ATPases have 2 components, CF(1) - the catalytic core - and CF(0) - the membrane proton channel. CF(1) has five subunits: alpha(3), beta(3), gamma(1), delta(1), epsilon(1). CF(0) has three main subunits: a, b and c.

The protein resides in the cell inner membrane. Produces ATP from ADP in the presence of a proton gradient across the membrane. This is ATP synthase epsilon chain 2 (atpC2) from Ralstonia nicotianae (strain ATCC BAA-1114 / GMI1000) (Ralstonia solanacearum).